Here is a 293-residue protein sequence, read N- to C-terminus: 4-hydroxybenzoate octaprenyltransferase (293 aa).

The next 8 helical transmembrane spans lie at 26-46 (IGTL…AKGM), 49-69 (IKVL…GCII), 102-122 (LFAL…PLVV), 148-168 (FLGI…LGEV), 173-193 (WWLF…YAMI), 217-237 (WIAV…LSAE), 240-260 (FIYA…QRLI), and 272-292 (FLNN…DYLL).

The protein belongs to the UbiA prenyltransferase family. Mg(2+) is required as a cofactor.

The protein localises to the cell inner membrane. The catalysed reaction is all-trans-octaprenyl diphosphate + 4-hydroxybenzoate = 4-hydroxy-3-(all-trans-octaprenyl)benzoate + diphosphate. The protein operates within cofactor biosynthesis; ubiquinone biosynthesis. Functionally, catalyzes the prenylation of para-hydroxybenzoate (PHB) with an all-trans polyprenyl group. Mediates the second step in the final reaction sequence of ubiquinone-8 (UQ-8) biosynthesis, which is the condensation of the polyisoprenoid side chain with PHB, generating the first membrane-bound Q intermediate 3-octaprenyl-4-hydroxybenzoate. This is 4-hydroxybenzoate octaprenyltransferase from Shewanella denitrificans (strain OS217 / ATCC BAA-1090 / DSM 15013).